The primary structure comprises 406 residues: 11-beta-hydroxysteroid dehydrogenase type 2 (406 aa).

NAD(+) is bound at residue 82-111; that stretch reads TRAVLITGCDSGFGKETAKKLDAMGFTVLA. Residue Ser-219 participates in substrate binding. The Proton acceptor role is filled by Tyr-232. The tract at residues 379–406 is disordered; sequence GQPGATPAPDTAQDNPNPNPDPSLVGAR.

This sequence belongs to the short-chain dehydrogenases/reductases (SDR) family. Interacts with ligand-free cytoplasmic NR3C2. Highly expressed in the kidney.

It is found in the microsome. It localises to the endoplasmic reticulum. It catalyses the reaction an 11beta-hydroxysteroid + NAD(+) = an 11-oxosteroid + NADH + H(+). It carries out the reaction corticosterone + NAD(+) = 11-dehydrocorticosterone + NADH + H(+). The catalysed reaction is cortisol + NAD(+) = cortisone + NADH + H(+). The enzyme catalyses 11beta,17beta-dihydroxyandrost-4-ene-3-one + NAD(+) = 17beta-hydroxyandrost-4-ene-3,11-dione + NADH + H(+). It catalyses the reaction 11beta-hydroxyandrost-4-ene-3,17-dione + NAD(+) = androst-4-ene-3,11,17-trione + NADH + H(+). Its pathway is steroid metabolism. Its activity is regulated as follows. Inhibited by carbenoloxone. Catalyzes the conversion of biologically active 11beta-hydroxyglucocorticoids (11beta-hydroxysteroid) such as corticosterone, to inactive 11-ketoglucocorticoids (11-oxosteroid) such as 11-dehydrocorticosterone, in the presence of NAD(+). Functions as a dehydrogenase (oxidase), thereby decreasing the concentration of active glucocorticoids, thus protecting the nonselective mineralocorticoid receptor from occupation by glucocorticoids. Plays an important role in maintaining glucocorticoids balance during preimplantation and protects the fetus from excessive maternal corticosterone exposure. Catalyzes the oxidation of 11beta-hydroxytestosterone (11beta,17beta-dihydroxyandrost-4-ene-3-one) to 11-ketotestosterone (17beta-hydroxyandrost-4-ene-3,11-dione), a major bioactive androgen. Catalyzes the conversion of 11beta-hydroxyandrostenedione (11beta-hydroxyandrost-4-ene-3,17-dione) to 11-ketoandrostenedione (androst-4-ene-3,11,17-trione), which can be further metabolized to 11-ketotestosterone. Converts 7-beta-25-dihydroxycholesterol to 7-oxo-25-hydroxycholesterol in vitro. 7-beta-25-dihydroxycholesterol (not 7-oxo-25-hydroxycholesterol) acts as a ligand for the G-protein-coupled receptor (GPCR) Epstein-Barr virus-induced gene 2 (EBI2) and may thereby regulate immune cell migration. May protect ovulating oocytes and fertilizing spermatozoa from the adverse effects of cortisol. This chain is 11-beta-hydroxysteroid dehydrogenase type 2 (HSD11B2), found in Oryctolagus cuniculus (Rabbit).